The chain runs to 158 residues: MGIEGVLKEGVVTTSADKLINWARTGSLWPMTFGLACCAVEMMHAGASRYDLDRFGIIFRPSPRQSDVMIVAGTLVNKMAPALRKVYDQMAEPRWVISMGSCANGGGYYHYSYSVVRGCDRIVPVDVYVPGCPPTAEALLYGIIQLQNKIKRTNTIAR.

4 residues coordinate [4Fe-4S] cluster: Cys-37, Cys-38, Cys-102, and Cys-132.

The protein belongs to the complex I 20 kDa subunit family. As to quaternary structure, NDH-1 is composed of 14 different subunits. Subunits NuoB, C, D, E, F, and G constitute the peripheral sector of the complex. Requires [4Fe-4S] cluster as cofactor.

Its subcellular location is the cell inner membrane. It carries out the reaction a quinone + NADH + 5 H(+)(in) = a quinol + NAD(+) + 4 H(+)(out). Functionally, NDH-1 shuttles electrons from NADH, via FMN and iron-sulfur (Fe-S) centers, to quinones in the respiratory chain. Couples the redox reaction to proton translocation (for every two electrons transferred, four hydrogen ions are translocated across the cytoplasmic membrane), and thus conserves the redox energy in a proton gradient. This chain is NADH-quinone oxidoreductase subunit B, found in Hydrogenovibrio crunogenus (strain DSM 25203 / XCL-2) (Thiomicrospira crunogena).